The following is a 736-amino-acid chain: DNA topoisomerase 4 subunit A (736 aa).

Residues 32-496 (LPDVRDGLKP…SFEQVTLTNQ (465 aa)) form the Topo IIA-type catalytic domain. The O-(5'-phospho-DNA)-tyrosine intermediate role is filled by Y120.

This sequence belongs to the type II topoisomerase GyrA/ParC subunit family. ParC type 1 subfamily. In terms of assembly, heterotetramer composed of ParC and ParE.

It is found in the cell membrane. It carries out the reaction ATP-dependent breakage, passage and rejoining of double-stranded DNA.. Its function is as follows. Topoisomerase IV is essential for chromosome segregation. It relaxes supercoiled DNA. Performs the decatenation events required during the replication of a circular DNA molecule. The polypeptide is DNA topoisomerase 4 subunit A (Rickettsia bellii (strain RML369-C)).